The sequence spans 208 residues: Ribosomal RNA large subunit methyltransferase E (208 aa).

5 residues coordinate S-adenosyl-L-methionine: Gly62, Trp64, Asp82, Asp98, and Asp123. Lys163 functions as the Proton acceptor in the catalytic mechanism.

This sequence belongs to the class I-like SAM-binding methyltransferase superfamily. RNA methyltransferase RlmE family.

The protein localises to the cytoplasm. It carries out the reaction uridine(2552) in 23S rRNA + S-adenosyl-L-methionine = 2'-O-methyluridine(2552) in 23S rRNA + S-adenosyl-L-homocysteine + H(+). Its function is as follows. Specifically methylates the uridine in position 2552 of 23S rRNA at the 2'-O position of the ribose in the fully assembled 50S ribosomal subunit. This chain is Ribosomal RNA large subunit methyltransferase E, found in Mannheimia succiniciproducens (strain KCTC 0769BP / MBEL55E).